Reading from the N-terminus, the 130-residue chain is MSVTQYYGTGRRKTSTARVFIKAGSGVITVNDRPLDEYFGRPVARMVVRQPLELVDLVEKFDVNVTVSGGGSFGQAGAIRHGLTRALMEYDENLRSELRKAGYVTRDSREVERKKVGLRKARKRPQYSKR.

The tract at residues 108–130 (SREVERKKVGLRKARKRPQYSKR) is disordered. The segment covering 116–130 (VGLRKARKRPQYSKR) has biased composition (basic residues).

It belongs to the universal ribosomal protein uS9 family.

This chain is Small ribosomal subunit protein uS9, found in Cellvibrio japonicus (strain Ueda107) (Pseudomonas fluorescens subsp. cellulosa).